A 245-amino-acid chain; its full sequence is rRNA adenine N-6-methyltransferase (245 aa).

Asn-10, Leu-12, Gly-37, Glu-58, Asp-83, and Ser-100 together coordinate S-adenosyl-L-methionine.

This sequence belongs to the class I-like SAM-binding methyltransferase superfamily. rRNA adenine N(6)-methyltransferase family.

The enzyme catalyses adenosine(2085) in 23S rRNA + 2 S-adenosyl-L-methionine = N(6)-dimethyladenosine(2085) in 23S rRNA + 2 S-adenosyl-L-homocysteine + 2 H(+). This protein produces a dimethylation of the adenine residue at position 2085 in 23S rRNA, resulting in reduced affinity between ribosomes and macrolide-lincosamide-streptogramin B antibiotics. This chain is rRNA adenine N-6-methyltransferase, found in Streptococcus sanguinis.